The primary structure comprises 198 residues: Recombination protein RecR (198 aa).

The C4-type zinc finger occupies 56-71 (CTECRDFSETKICAIC). The Toprim domain maps to 79–174 (HQLCVVESPP…RPSRLAQGLP (96 aa)).

This sequence belongs to the RecR family.

May play a role in DNA repair. It seems to be involved in an RecBC-independent recombinational process of DNA repair. It may act with RecF and RecO. The protein is Recombination protein RecR of Xylella fastidiosa (strain 9a5c).